The sequence spans 200 residues: 3-isopropylmalate dehydratase small subunit (200 aa).

This sequence belongs to the LeuD family. LeuD type 1 subfamily. As to quaternary structure, heterodimer of LeuC and LeuD.

The catalysed reaction is (2R,3S)-3-isopropylmalate = (2S)-2-isopropylmalate. It functions in the pathway amino-acid biosynthesis; L-leucine biosynthesis; L-leucine from 3-methyl-2-oxobutanoate: step 2/4. Its function is as follows. Catalyzes the isomerization between 2-isopropylmalate and 3-isopropylmalate, via the formation of 2-isopropylmaleate. This chain is 3-isopropylmalate dehydratase small subunit, found in Erythrobacter litoralis (strain HTCC2594).